The following is a 172-amino-acid chain: Shikimate kinase (172 aa).

ATP is bound at residue 14 to 19; the sequence is GAGKST. Ser18 provides a ligand contact to Mg(2+). The substrate site is built by Asp36, Arg60, and Gly82. Residue Arg120 participates in ATP binding. Substrate is bound at residue Arg140. Gln157 provides a ligand contact to ATP.

It belongs to the shikimate kinase family. As to quaternary structure, monomer. Requires Mg(2+) as cofactor.

It localises to the cytoplasm. It catalyses the reaction shikimate + ATP = 3-phosphoshikimate + ADP + H(+). It functions in the pathway metabolic intermediate biosynthesis; chorismate biosynthesis; chorismate from D-erythrose 4-phosphate and phosphoenolpyruvate: step 5/7. In terms of biological role, catalyzes the specific phosphorylation of the 3-hydroxyl group of shikimic acid using ATP as a cosubstrate. This Aeromonas salmonicida (strain A449) protein is Shikimate kinase.